We begin with the raw amino-acid sequence, 214 residues long: uncharacterized protein (214 aa).

2 CBS domains span residues 7-65 (MDKN…KKPI) and 69-129 (MRPV…EIPV).

This is an uncharacterized protein from Methanocaldococcus jannaschii (strain ATCC 43067 / DSM 2661 / JAL-1 / JCM 10045 / NBRC 100440) (Methanococcus jannaschii).